Reading from the N-terminus, the 578-residue chain is Sulfite reductase [NADPH] hemoprotein beta-component (578 aa).

Positions 441, 447, 487, and 491 each coordinate [4Fe-4S] cluster. Cys-491 is a binding site for siroheme.

Belongs to the nitrite and sulfite reductase 4Fe-4S domain family. In terms of assembly, alpha(8)-beta(8). The alpha component is a flavoprotein, the beta component is a hemoprotein. The cofactor is siroheme. [4Fe-4S] cluster serves as cofactor.

It catalyses the reaction hydrogen sulfide + 3 NADP(+) + 3 H2O = sulfite + 3 NADPH + 4 H(+). It functions in the pathway sulfur metabolism; hydrogen sulfide biosynthesis; hydrogen sulfide from sulfite (NADPH route): step 1/1. In terms of biological role, component of the sulfite reductase complex that catalyzes the 6-electron reduction of sulfite to sulfide. This is one of several activities required for the biosynthesis of L-cysteine from sulfate. The chain is Sulfite reductase [NADPH] hemoprotein beta-component from Vibrio vulnificus (strain YJ016).